A 28-amino-acid chain; its full sequence is uORF1 protein (28 aa).

It localises to the host cytoplasm. The protein resides in the host cytoskeleton. In terms of biological role, plays a role in the reorganization of host microtubules and intermediate filaments to form a cytoskeletal cage that surrounds the viral factories, protecting the site of viral replication. May play a role in viral infection of human cortical neurons. The chain is uORF1 protein from Zika virus (isolate ZIKV/Human/French Polynesia/10087PF/2013) (ZIKV).